An 88-amino-acid polypeptide reads, in one-letter code: Arminin 1c (88 aa).

An N-terminal signal peptide occupies residues methionine 1–alanine 18. A propeptide spanning residues glutamate 19–alanine 57 is cleaved from the precursor. At valine 85 the chain carries Valine amide.

The protein belongs to the arminin family. In terms of tissue distribution, expressed in entodermal epithelium along the body column.

It is found in the secreted. Its subcellular location is the target cell membrane. Functionally, antimicrobial peptide with a broad-spectrum antimicrobial activity. Keeps its antibacterial activity under a wide range of salt concentrations that mimic physiological conditions of human blood, which is surprising, since Hydra is an obligate freshwater animal with nearly no salt tolerance. Does not affect red blood cells. The sequence is that of Arminin 1c from Hydra vulgaris (Hydra).